The primary structure comprises 152 residues: Xanthine-guanine phosphoribosyltransferase (152 aa).

Residues 37–38 (RG), Arg69, and 88–96 (DDLVDTGGT) each bind 5-phospho-alpha-D-ribose 1-diphosphate. Position 69 (Arg69) interacts with GMP. Asp89 provides a ligand contact to Mg(2+). Positions 92 and 135 each coordinate guanine. Xanthine is bound by residues Asp92 and Ile135. GMP-binding positions include 92 to 96 (DTGGT) and 134 to 135 (WI).

This sequence belongs to the purine/pyrimidine phosphoribosyltransferase family. XGPT subfamily. In terms of assembly, homotetramer. Mg(2+) is required as a cofactor.

It is found in the cell inner membrane. It catalyses the reaction GMP + diphosphate = guanine + 5-phospho-alpha-D-ribose 1-diphosphate. It carries out the reaction XMP + diphosphate = xanthine + 5-phospho-alpha-D-ribose 1-diphosphate. The enzyme catalyses IMP + diphosphate = hypoxanthine + 5-phospho-alpha-D-ribose 1-diphosphate. It functions in the pathway purine metabolism; GMP biosynthesis via salvage pathway; GMP from guanine: step 1/1. The protein operates within purine metabolism; XMP biosynthesis via salvage pathway; XMP from xanthine: step 1/1. In terms of biological role, purine salvage pathway enzyme that catalyzes the transfer of the ribosyl-5-phosphate group from 5-phospho-alpha-D-ribose 1-diphosphate (PRPP) to the N9 position of the 6-oxopurines guanine and xanthine to form the corresponding ribonucleotides GMP (guanosine 5'-monophosphate) and XMP (xanthosine 5'-monophosphate), with the release of PPi. To a lesser extent, also acts on hypoxanthine. This Serratia proteamaculans (strain 568) protein is Xanthine-guanine phosphoribosyltransferase.